The following is a 237-amino-acid chain: Pyridoxal phosphate homeostasis protein (237 aa).

An N6-(pyridoxal phosphate)lysine modification is found at Lys-31.

The protein belongs to the pyridoxal phosphate-binding protein YggS/PROSC family.

It is found in the cytoplasm. Its subcellular location is the nucleus. In terms of biological role, pyridoxal 5'-phosphate (PLP)-binding protein, which may be involved in intracellular homeostatic regulation of pyridoxal 5'-phosphate (PLP), the active form of vitamin B6. The sequence is that of Pyridoxal phosphate homeostasis protein from Schizosaccharomyces pombe (strain 972 / ATCC 24843) (Fission yeast).